We begin with the raw amino-acid sequence, 352 residues long: MKSLVLLLCFAQLWSCQSAPQGAGLGFRELACDDPETEHVALIAVDYLNKHLLQGFRQILNQIDKVKVWSRRPFGEVYELEIDTLETTCHALDPTPLANCSVRQQAEHAVEGDCDFHILKQDGQFRVLHAQCHSTPDSAEDVRKFCPRCPILIRFNDTNVVHTVKTALAAFNAQNNGTYFKLVEISRAQNVPFPVSTLVEFVIAATDCTGQEVTDPAKCNLLAEKQYGFCKATLIHRLGGEEVSVACKLFQTQPQPANANPAGPAPTVGQAAPVAPPAGPPESVVVGPVAVPLGLPDHRTHHDLRHAFSPVASVESASGEVLHSPKVGQPGDAGAAGPVAPLCPGRVRYFKI.

An N-terminal signal peptide occupies residues 1-18 (MKSLVLLLCFAQLWSCQS). The Cystatin fetuin-A-type 1 domain maps to 19–133 (APQGAGLGFR…QFRVLHAQCH (115 aa)). 6 disulfide bridges follow: Cys32–Cys343, Cys89–Cys100, Cys114–Cys132, Cys146–Cys149, Cys208–Cys219, and Cys230–Cys247. Residue Asn99 is glycosylated (N-linked (GlcNAc...) asparagine). Residue Ser134 is modified to Phosphoserine. Thr135 carries the phosphothreonine modification. Ser138 bears the Phosphoserine mark. The region spanning 144–250 (KFCPRCPILI…EEVSVACKLF (107 aa)) is the Cystatin fetuin-A-type 2 domain. 2 N-linked (GlcNAc...) asparagine glycosylation sites follow: Asn156 and Asn176. Over residues 256 to 273 (PANANPAGPAPTVGQAAP) the composition is skewed to low complexity. Positions 256–280 (PANANPAGPAPTVGQAAPVAPPAGP) are disordered. Residues Ser309, Ser313, Ser316, and Ser318 each carry the phosphoserine modification. The tract at residues 319-338 (GEVLHSPKVGQPGDAGAAGP) is disordered. Low complexity predominate over residues 328–338 (GQPGDAGAAGP).

The protein belongs to the fetuin family. Undergoes complex post-translational modification involving N-glycosylation, and addition of fucose and sialic acid residues. Phosphorylation occurs at a serine residue. Post-translationally, phosphorylated by FAM20C in the extracellular medium. Synthesized in liver and secreted by the hepatocytes in the blood.

The protein resides in the secreted. Could inhibit both insulin-receptor tyrosine kinase activity and insulin-stimulated receptor autophosphorylation and, concomitantly, antagonize the mitogenic effect of the hormone in cultured rat hepatoma cells. The polypeptide is Alpha-2-HS-glycoprotein (Ahsg) (Rattus norvegicus (Rat)).